A 209-amino-acid chain; its full sequence is Orotate phosphoribosyltransferase (209 aa).

5-phospho-alpha-D-ribose 1-diphosphate is bound by residues Arg98, Lys102, His104, and 124 to 132 (EDLISTGKS). Residue Ser128 participates in orotate binding.

It belongs to the purine/pyrimidine phosphoribosyltransferase family. PyrE subfamily. As to quaternary structure, homodimer. The cofactor is Mg(2+).

It catalyses the reaction orotidine 5'-phosphate + diphosphate = orotate + 5-phospho-alpha-D-ribose 1-diphosphate. The protein operates within pyrimidine metabolism; UMP biosynthesis via de novo pathway; UMP from orotate: step 1/2. Functionally, catalyzes the transfer of a ribosyl phosphate group from 5-phosphoribose 1-diphosphate to orotate, leading to the formation of orotidine monophosphate (OMP). This is Orotate phosphoribosyltransferase from Malacoplasma penetrans (strain HF-2) (Mycoplasma penetrans).